Consider the following 122-residue polypeptide: Large ribosomal subunit protein bL12 (122 aa).

The protein belongs to the bacterial ribosomal protein bL12 family. Homodimer. Part of the ribosomal stalk of the 50S ribosomal subunit. Forms a multimeric L10(L12)X complex, where L10 forms an elongated spine to which 2 to 4 L12 dimers bind in a sequential fashion. Binds GTP-bound translation factors.

In terms of biological role, forms part of the ribosomal stalk which helps the ribosome interact with GTP-bound translation factors. Is thus essential for accurate translation. This is Large ribosomal subunit protein bL12 from Pasteurella multocida (strain Pm70).